The chain runs to 301 residues: 2-dehydropantoate 2-reductase (301 aa).

NADP(+)-binding positions include 7-12, Lys74, Asn99, and Ala123; that span reads GAGAIG. Residue Lys179 is the Proton donor of the active site. Residues Lys179, Asn183, Asn187, Asn197, and 246-249 contribute to the substrate site; that span reads NYNS. Glu261 lines the NADP(+) pocket.

This sequence belongs to the ketopantoate reductase family.

The protein localises to the cytoplasm. It catalyses the reaction (R)-pantoate + NAD(+) = 2-dehydropantoate + NADH + H(+). The enzyme catalyses (R)-pantoate + NADP(+) = 2-dehydropantoate + NADPH + H(+). It participates in cofactor biosynthesis; coenzyme A biosynthesis. In terms of biological role, catalyzes the NAD(P)H-dependent reduction of ketopantoate into pantoic acid. This chain is 2-dehydropantoate 2-reductase, found in Pyrococcus horikoshii (strain ATCC 700860 / DSM 12428 / JCM 9974 / NBRC 100139 / OT-3).